We begin with the raw amino-acid sequence, 188 residues long: Viral FLICE protein (188 aa).

2 DED domains span residues 2 to 74 and 93 to 169; these read ATYE…DLLH and PYQL…QVQT.

Interacts with host RIPK1, TRAF2, MAP3K14, IKBKB, and IKBKG. Interacts with host CADM1; this interaction is essential for chronic NF-kappa-B activation.

Plays a role in the modulation of host signaling pathways by acting as an activator of both the classic and the alternative NF-kappa-B pathways. Thereby, initiates an important range of cellular processes to promote cell survival, proliferation and protection from apoptosis. The sequence is that of Viral FLICE protein (ORF71) from Human herpesvirus 8 type P (isolate GK18) (HHV-8).